Reading from the N-terminus, the 390-residue chain is Lipoyl synthase, mitochondrial (390 aa).

The transit peptide at 1-19 (MPTLLRILRPPRSPFTRCL) directs the protein to the mitochondrion. The segment at 23–48 (ATPSSSGSSSRSKFTESLETGPGLDD) is disordered. Residues C98, C103, C109, C136, C140, C143, and S350 each contribute to the [4Fe-4S] cluster site. A Radical SAM core domain is found at 119-339 (AEGRSAATAT…KEVAENLGFL (221 aa)).

This sequence belongs to the radical SAM superfamily. Lipoyl synthase family. Requires [4Fe-4S] cluster as cofactor.

Its subcellular location is the mitochondrion. It catalyses the reaction [[Fe-S] cluster scaffold protein carrying a second [4Fe-4S](2+) cluster] + N(6)-octanoyl-L-lysyl-[protein] + 2 oxidized [2Fe-2S]-[ferredoxin] + 2 S-adenosyl-L-methionine + 4 H(+) = [[Fe-S] cluster scaffold protein] + N(6)-[(R)-dihydrolipoyl]-L-lysyl-[protein] + 4 Fe(3+) + 2 hydrogen sulfide + 2 5'-deoxyadenosine + 2 L-methionine + 2 reduced [2Fe-2S]-[ferredoxin]. It functions in the pathway protein modification; protein lipoylation via endogenous pathway; protein N(6)-(lipoyl)lysine from octanoyl-[acyl-carrier-protein]: step 2/2. Functionally, catalyzes the radical-mediated insertion of two sulfur atoms into the C-6 and C-8 positions of the octanoyl moiety bound to the lipoyl domains of lipoate-dependent enzymes, thereby converting the octanoylated domains into lipoylated derivatives. In Laccaria bicolor (strain S238N-H82 / ATCC MYA-4686) (Bicoloured deceiver), this protein is Lipoyl synthase, mitochondrial.